Here is a 44-residue protein sequence, read N- to C-terminus: uncharacterized protein (44 aa).

Its subcellular location is the plastid. It is found in the chloroplast. This is an uncharacterized protein from Trieres chinensis (Marine centric diatom).